The chain runs to 442 residues: Pentatricopeptide repeat-containing protein At2g27800, mitochondrial (442 aa).

The transit peptide at 1 to 67 (MSATRSTFLG…SFLPSIHVRF (67 aa)) directs the protein to the mitochondrion. 6 PPR repeats span residues 206–236 (NENL…MVTS), 244–286 (TIRT…GIEP), 287–322 (DVFA…DCEP), 323–357 (NSFT…GFVP), 358–392 (NGKS…GRVV), and 393–427 (DFIS…QLVD).

It belongs to the PPR family. P subfamily.

Its subcellular location is the mitochondrion. The protein is Pentatricopeptide repeat-containing protein At2g27800, mitochondrial of Arabidopsis thaliana (Mouse-ear cress).